Reading from the N-terminus, the 411-residue chain is L-cysteine:1D-myo-inositol 2-amino-2-deoxy-alpha-D-glucopyranoside ligase (411 aa).

Residue Cys-43 participates in Zn(2+) binding. Residues 43 to 46 (CGIT), Thr-58, and 81 to 83 (NVT) each bind L-cysteinyl-5'-AMP. The 'HIGH' region signature appears at 45-55 (ITPYDATHLGH). Positions 186–191 (QRGGDP) match the 'ERGGDP' region motif. L-cysteinyl-5'-AMP is bound at residue Trp-226. Residue Cys-230 coordinates Zn(2+). Residue 248 to 250 (GSD) coordinates L-cysteinyl-5'-AMP. His-255 lines the Zn(2+) pocket. Ile-282 lines the L-cysteinyl-5'-AMP pocket. Positions 288 to 292 (KMSKS) match the 'KMSKS' region motif.

The protein belongs to the class-I aminoacyl-tRNA synthetase family. MshC subfamily. In terms of assembly, monomer. Requires Zn(2+) as cofactor.

It catalyses the reaction 1D-myo-inositol 2-amino-2-deoxy-alpha-D-glucopyranoside + L-cysteine + ATP = 1D-myo-inositol 2-(L-cysteinylamino)-2-deoxy-alpha-D-glucopyranoside + AMP + diphosphate + H(+). Catalyzes the ATP-dependent condensation of GlcN-Ins and L-cysteine to form L-Cys-GlcN-Ins. The sequence is that of L-cysteine:1D-myo-inositol 2-amino-2-deoxy-alpha-D-glucopyranoside ligase from Mycobacterium ulcerans (strain Agy99).